Consider the following 61-residue polypeptide: Large ribosomal subunit protein uL30 (61 aa).

Belongs to the universal ribosomal protein uL30 family. In terms of assembly, part of the 50S ribosomal subunit.

The chain is Large ribosomal subunit protein uL30 from Acidithiobacillus ferrooxidans (strain ATCC 23270 / DSM 14882 / CIP 104768 / NCIMB 8455) (Ferrobacillus ferrooxidans (strain ATCC 23270)).